A 305-amino-acid chain; its full sequence is GTPase Era (305 aa).

Positions 11–181 constitute an Era-type G domain; the sequence is RSGFISFVGR…LDVITRLLPE (171 aa). Residues 19–26 form a G1 region; it reads GRPNTGKS. 19–26 serves as a coordination point for GTP; it reads GRPNTGKS. The interval 45 to 49 is G2; the sequence is ETTRH. The tract at residues 66–69 is G3; it reads DTPG. GTP contacts are provided by residues 66-70 and 130-133; these read DTPGL and TKVD. Positions 130 to 133 are G4; the sequence is TKVD. Residues 160–162 are G5; that stretch reads VSA. In terms of domain architecture, KH type-2 spans 212–291; that stretch reads LKDELPHSVA…YLDLRIKVLK (80 aa).

The protein belongs to the TRAFAC class TrmE-Era-EngA-EngB-Septin-like GTPase superfamily. Era GTPase family. As to quaternary structure, monomer.

It localises to the cytoplasm. The protein localises to the cell membrane. Its function is as follows. An essential GTPase that binds both GDP and GTP, with rapid nucleotide exchange. Plays a role in 16S rRNA processing and 30S ribosomal subunit biogenesis and possibly also in cell cycle regulation and energy metabolism. The chain is GTPase Era from Corynebacterium diphtheriae (strain ATCC 700971 / NCTC 13129 / Biotype gravis).